The sequence spans 421 residues: Testin (421 aa).

A PET domain is found at 92 to 199 (MILTNPVAAK…GDVKLPQEMD (108 aa)). LIM zinc-binding domains are found at residues 234 to 297 (YSCY…CDSE), 299 to 359 (PRCA…NHAV), and 362 to 421 (QGCH…KMMS).

The protein belongs to the prickle / espinas / testin family. In terms of assembly, interacts via LIM domain 1 with ZYX. Interacts (via LIM domain 3) with ENAH and VASP. Interacts with ALKBH4, talin, actin, alpha-actinin, GRIP1 and PXN. Interacts (via LIM domain 2) with ACTL7A (via N-terminus). Heterodimer with ACTL7A; the heterodimer interacts with ENAH to form a heterotrimer.

It is found in the cytoplasm. It localises to the cell junction. The protein localises to the focal adhesion. Functionally, scaffold protein that may play a role in cell adhesion, cell spreading and in the reorganization of the actin cytoskeleton. Plays a role in the regulation of cell proliferation. May act as a tumor suppressor. This chain is Testin (TES), found in Loxodonta africana (African elephant).